A 269-amino-acid chain; its full sequence is Protein TORNADO 2 (269 aa).

Residues 1-10 (MPLSNNVIGC) are Cytoplasmic-facing. The chain crosses the membrane as a helical span at residues 11 to 31 (INFITVLLSIPVIGAGIWLAI). At 32–44 (GTVNSCVKLLQWP) the chain is on the extracellular side. Residues 45–65 (VIILGVLILLVGLAGFIGGFW) traverse the membrane as a helical segment. The Cytoplasmic portion of the chain corresponds to 66 to 71 (RITWLL). Residues 72-92 (VVYLIAMLILIVLLGCLVGFI) form a helical membrane-spanning segment. Topologically, residues 93–231 (YMVTIRGSGH…NIKVDWLKAD (139 aa)) are extracellular. A glycan (N-linked (GlcNAc...) asparagine) is linked at asparagine 200. The helical transmembrane segment at 232–252 (IFLLLALIGLIIVYIIGCCAF) threads the bilayer. The Cytoplasmic portion of the chain corresponds to 253-269 (RNAETEDIFRKYKQGYT).

The protein belongs to the tetraspanin (TM4SF) family. In terms of tissue distribution, expressed in seedlings, roots, leaves, stems, apex, siliques and flowers. Present in ovules, prominently in nucellus and integuments.

It localises to the membrane. Involved in the basipetal transport of auxin (IAA) that modulates growth and organs organization, as well as cell differentiation. Regulates shoot apical meristem (SAM) organization in the peripheral zone. Required for initial meristematic divisions in the epidermal/lateral root cap leading to the formation of epidermal cells and a clone of lateral root cap cells, as well as for the maintenance of the radial pattern of cell specification in the root, thus regulating the distinction between the lateral root cap and epidermis. Together with WIH peptides, promotes megasporogenesis. The chain is Protein TORNADO 2 (TRN2) from Arabidopsis thaliana (Mouse-ear cress).